A 348-amino-acid polypeptide reads, in one-letter code: Ethanol acetyltransferase 2 (348 aa).

The N-terminal 19 residues, 1-19 (MIFNSLSIKRLSSTXTSLP), are a transit peptide targeting the mitochondrion. The AB hydrolase-1 domain occupies 49-305 (IIFLHGIYGY…VMKERPQEYI (257 aa)). Active-site charge relay system residues include S121, D145, and H294.

The protein belongs to the AB hydrolase superfamily.

The protein localises to the mitochondrion. It carries out the reaction ethanol + acetyl-CoA = ethyl acetate + CoA. It catalyses the reaction acetyl-CoA + H2O = acetate + CoA + H(+). The catalysed reaction is ethyl acetate + H2O = ethanol + acetate + H(+). Alcohol acetyltransferase that catalyzes the synthesis of ethyl acetate from ethanol and acetyl-CoA. Can also function as a thioesterase by hydrolyzing acetyl-CoA in the absence of ethanol, as well as esterase hydrolyzing ethyl acetate. This is Ethanol acetyltransferase 2 (EAT2) from Hanseniaspora uvarum (Yeast).